The primary structure comprises 111 residues: uncharacterized protein (111 aa).

Its subcellular location is the mitochondrion. This is an uncharacterized protein from Arabidopsis thaliana (Mouse-ear cress).